A 386-amino-acid chain; its full sequence is MVGVSVLGISGSVGTSTVKVLRQFPDQFDLRSFSVHSNWNVAKALVEEFSPEVICITDPKLVGKFGDSYLSTKILYGDKALIDLVQLPSVGVVVTAVMGARGVLPTIAAIEAGKKIAIANKETLVTFGPLINRLVAKHNTVMVPVDSEHNALFQLIERETRSNIRAITLTASGGSFRTLPLEALEHVSVKQALNHPTWSMGPKITVDSAGLINKGLEVIEAHFLFGFSYDEIEVVIHPQSITHGIIETTDGACLLYASHPDMVYPIAHSLFYPNPTPQMLIERKPSTWNTFEFFPPDTKRYPGLLLAYQAGKAGGAAPGIFNAANEEAVALFLEEKISFTTIPRLIESALNQIENVFPETLDGYLEKDQETRNYIQREFNQGGVTT.

NADPH contacts are provided by S10, G11, S12, V13, N38, and N120. A 1-deoxy-D-xylulose 5-phosphate-binding site is contributed by K121. An NADPH-binding site is contributed by E122. A Mn(2+)-binding site is contributed by D146. 1-deoxy-D-xylulose 5-phosphate is bound by residues S147, E148, S172, and H195. E148 is a binding site for Mn(2+). G201 is an NADPH binding site. 1-deoxy-D-xylulose 5-phosphate-binding residues include S208, N213, K214, and E217. E217 provides a ligand contact to Mn(2+).

Belongs to the DXR family. It depends on Mg(2+) as a cofactor. Requires Mn(2+) as cofactor.

It carries out the reaction 2-C-methyl-D-erythritol 4-phosphate + NADP(+) = 1-deoxy-D-xylulose 5-phosphate + NADPH + H(+). It functions in the pathway isoprenoid biosynthesis; isopentenyl diphosphate biosynthesis via DXP pathway; isopentenyl diphosphate from 1-deoxy-D-xylulose 5-phosphate: step 1/6. In terms of biological role, catalyzes the NADPH-dependent rearrangement and reduction of 1-deoxy-D-xylulose-5-phosphate (DXP) to 2-C-methyl-D-erythritol 4-phosphate (MEP). The sequence is that of 1-deoxy-D-xylulose 5-phosphate reductoisomerase from Leptospira biflexa serovar Patoc (strain Patoc 1 / Ames).